Reading from the N-terminus, the 363-residue chain is Cyclin-D1-1 (363 aa).

The tract at residues 39-77 (ELEREGEPAQGSSPSSSLSCAAAAAAAADDDDEDEDEHG) is disordered. Positions 50 to 65 (SSPSSSLSCAAAAAAA) are enriched in low complexity. Residues 66 to 75 (ADDDDEDEDE) show a composition bias toward acidic residues.

Belongs to the cyclin family. Cyclin D subfamily.

This is Cyclin-D1-1 (CYCD1-1) from Oryza sativa subsp. japonica (Rice).